Reading from the N-terminus, the 225-residue chain is ATP-dependent dethiobiotin synthetase BioD (225 aa).

Residue 12 to 17 (EVGKTY) participates in ATP binding. Position 16 (Thr16) interacts with Mg(2+). Lys37 is an active-site residue. Ser41 serves as a coordination point for substrate. ATP-binding positions include Asp52, 114–117 (EGAG), and 174–175 (NC). 2 residues coordinate Mg(2+): Asp52 and Glu114.

The protein belongs to the dethiobiotin synthetase family. In terms of assembly, homodimer. The cofactor is Mg(2+).

It is found in the cytoplasm. The catalysed reaction is (7R,8S)-7,8-diammoniononanoate + CO2 + ATP = (4R,5S)-dethiobiotin + ADP + phosphate + 3 H(+). Its pathway is cofactor biosynthesis; biotin biosynthesis; biotin from 7,8-diaminononanoate: step 1/2. Functionally, catalyzes a mechanistically unusual reaction, the ATP-dependent insertion of CO2 between the N7 and N8 nitrogen atoms of 7,8-diaminopelargonic acid (DAPA, also called 7,8-diammoniononanoate) to form a ureido ring. The chain is ATP-dependent dethiobiotin synthetase BioD from Francisella tularensis subsp. novicida (strain U112).